The following is a 200-amino-acid chain: Recombination protein RecR (200 aa).

The C4-type zinc-finger motif lies at 58–75; sequence CSNCFCLKISQTSPCNFC. Residues 82-177 form the Toprim domain; it reads SSLCIVATPK…KISRLALGMP (96 aa).

The protein belongs to the RecR family.

May play a role in DNA repair. It seems to be involved in an RecBC-independent recombinational process of DNA repair. It may act with RecF and RecO. The polypeptide is Recombination protein RecR (Chlamydia trachomatis serovar D (strain ATCC VR-885 / DSM 19411 / UW-3/Cx)).